The chain runs to 636 residues: Signal recognition particle receptor subunit alpha (636 aa).

Disordered regions lie at residues 132–205 (APTT…ELSK), 217–246 (IQKH…APRV), and 280–314 (IRGT…TKGT). Composition is skewed to basic and acidic residues over residues 137–146 (KKFEDSEKAK) and 153–165 (IETR…EKAK). Ser177 bears the Phosphoserine mark. Residues 217-238 (IQKHGKGLDKSSKSTKSDTPKE) show a composition bias toward basic and acidic residues. Residue Thr283 is modified to Phosphothreonine. 3 positions are modified to phosphoserine: Ser295, Ser296, and Ser297. The span at 302–312 (ATQNTKPSATK) shows a compositional bias: polar residues. Thr303 is modified (phosphothreonine). Residues 417–634 (YVVTFCGVNG…NAKAVVAALM (218 aa)) are NG domain. Residues 423 to 430 (GVNGVGKS) and 518 to 522 (DTAGR) each bind GTP. Thr576 bears the Phosphothreonine mark. 586-589 (TKFD) contacts GTP.

Belongs to the GTP-binding SRP family. In terms of assembly, heterodimer with SRPRB. Interacts with the signal recognition particle (SRP) complex subunit SRP54.

Its subcellular location is the endoplasmic reticulum membrane. In terms of biological role, component of the SRP (signal recognition particle) receptor. Ensures, in conjunction with the signal recognition particle, the correct targeting of the nascent secretory proteins to the endoplasmic reticulum membrane system. Forms a guanosine 5'-triphosphate (GTP)-dependent complex with the SRP subunit SRP54. SRP receptor compaction and GTPase rearrangement drive SRP-mediated cotranslational protein translocation into the ER. This Mus musculus (Mouse) protein is Signal recognition particle receptor subunit alpha.